Reading from the N-terminus, the 432-residue chain is MKKVIYTIVGFVFMWSTSVYADLTIQIDQSSDNAVPIALVPFEWKGAQLHPPQNITSIVGNDLLRSGKFKAVDEAKLPSRPKTLDDIDFYQWKQLGVDNLLMGRITEEANGTYQIEMRFVDLLRKEQVIGKRWSGISKSLLRQVAHKMSDLIYEELTGIRGAFNTRMAYVTVRNVKGKKQYSLEVADSDGYNSQPILRSSLPIMSPSWSPDGQHLAYVSFENGRSQIVLQSLDGKSRQIIAKFKGINGAPAWSPDGKKLALTLSKDGSADVYIMDMKTRKLRRLTRNWAIETEAVWAPNGHSLFFNSDRRGQPQIFQVFLDTGEMRRISYVGRYNANPAISPDGRYVAMVHANGGFHIAVLDLYNEDFNILTKTYLDESPTFSPNGEMILYAMNQGGQGKLAVVSVNSNVTQILSVQEGEVRSPSWGPYLPR.

The N-terminal stretch at 1-21 (MKKVIYTIVGFVFMWSTSVYA) is a signal peptide.

The protein belongs to the TolB family. The Tol-Pal system is composed of five core proteins: the inner membrane proteins TolA, TolQ and TolR, the periplasmic protein TolB and the outer membrane protein Pal. They form a network linking the inner and outer membranes and the peptidoglycan layer.

The protein localises to the periplasm. Part of the Tol-Pal system, which plays a role in outer membrane invagination during cell division and is important for maintaining outer membrane integrity. This chain is Tol-Pal system protein TolB, found in Hydrogenovibrio crunogenus (strain DSM 25203 / XCL-2) (Thiomicrospira crunogena).